The primary structure comprises 245 residues: Phosphoadenosine 5'-phosphosulfate reductase (245 aa).

Residue Cys239 is the Nucleophile; cysteine thiosulfonate intermediate of the active site.

It belongs to the PAPS reductase family. CysH subfamily.

Its subcellular location is the cytoplasm. The enzyme catalyses [thioredoxin]-disulfide + sulfite + adenosine 3',5'-bisphosphate + 2 H(+) = [thioredoxin]-dithiol + 3'-phosphoadenylyl sulfate. It participates in sulfur metabolism; hydrogen sulfide biosynthesis; sulfite from sulfate: step 3/3. In terms of biological role, catalyzes the formation of sulfite from phosphoadenosine 5'-phosphosulfate (PAPS) using thioredoxin as an electron donor. This chain is Phosphoadenosine 5'-phosphosulfate reductase, found in Shewanella oneidensis (strain ATCC 700550 / JCM 31522 / CIP 106686 / LMG 19005 / NCIMB 14063 / MR-1).